The chain runs to 747 residues: Protein O-mannosyl-transferase 1 (747 aa).

Transmembrane regions (helical) follow at residues 8–28, 40–60, 68–88, 99–119, 122–142, 154–174, 183–203, 206–226, and 269–289; these read PVVVTADINLSLVALTGMGLL, VVFDEVYYGQYISFYMKQIFF, FGHMVLALGGYLGGFDGNFLW, VPVWSLRLLPALAGALSVPMA, IVLELHFSHCAAMGAALLMLI, LLESVLIFFNLLAVLSYLKFF, SLSWWFWLTLTGVACSCAVGI, MGVFTYVLVLGVAAVHAWHLL, and LLVIPVVLYLLFFYVHLILVF. MIR domains lie at 318–381, 392–449, and 453–513; these read PLEV…VKDP, PRPV…LEIV, and SDTD…VEEH. N-linked (GlcNAc...) asparagine glycosylation is found at Asn-435, Asn-471, and Asn-539. The next 3 helical transmembrane spans lie at 597–617, 636–656, and 661–681; these read IVIWVSGSLALAIYALLSLWY, WVLAGALCAGGWAVNYLPFFL, and LFLYHYLPALTFQILLLPVVL.

It belongs to the glycosyltransferase 39 family. As to quaternary structure, interacts with POMT2. Widely expressed. Highly expressed in testis, heart and pancreas. Detected at lower levels in kidney, skeletal muscle, brain, placenta, lung and liver.

It localises to the endoplasmic reticulum membrane. It catalyses the reaction a di-trans,poly-cis-dolichyl beta-D-mannosyl phosphate + L-seryl-[protein] = 3-O-(alpha-D-mannosyl)-L-seryl-[protein] + a di-trans,poly-cis-dolichyl phosphate + H(+). The enzyme catalyses a di-trans,poly-cis-dolichyl beta-D-mannosyl phosphate + L-threonyl-[protein] = 3-O-(alpha-D-mannosyl)-L-threonyl-[protein] + a di-trans,poly-cis-dolichyl phosphate + H(+). The protein operates within protein modification; protein glycosylation. With respect to regulation, slightly activated by Mg(2+) and inhibited by both Ca(+) and Mn(2+). EDTA ha no effect on activity in vitro. In terms of biological role, transfers mannosyl residues to the hydroxyl group of serine or threonine residues. Coexpression of both POMT1 and POMT2 is necessary for enzyme activity, expression of either POMT1 or POMT2 alone is insufficient. Essentially dedicated to O-mannosylation of alpha-DAG1 and few other proteins but not of cadherins and protocaherins. This is Protein O-mannosyl-transferase 1 (POMT1) from Homo sapiens (Human).